The primary structure comprises 163 residues: Olfactory marker protein (163 aa).

At A2 the chain carries N-acetylalanine.

The protein belongs to the olfactory marker protein family. In terms of assembly, interacts with BEX1 and BEX2. In terms of tissue distribution, uniquely associated with mature olfactory receptor neurons.

Its subcellular location is the cytoplasm. Its function is as follows. May act as a modulator of the olfactory signal-transduction cascade. In Mus musculus (Mouse), this protein is Olfactory marker protein (Omp).